Reading from the N-terminus, the 249-residue chain is Zinc finger protein CG30 (249 aa).

The RING-type zinc finger occupies cysteine 8 to arginine 66.

The protein is Zinc finger protein CG30 (CG30) of Orgyia pseudotsugata (Douglas-fir tussock moth).